The following is a 406-amino-acid chain: Tyrosine--tRNA ligase (406 aa).

The short motif at 51 to 60 (PTAPDLHLGH) is the 'HIGH' region element. A 'KMSKS' region motif is present at residues 236–240 (KMSKS). Lysine 239 is an ATP binding site. One can recognise an S4 RNA-binding domain in the interval 345–405 (IWICKAMVEG…GKRKFLRLIV (61 aa)).

It belongs to the class-I aminoacyl-tRNA synthetase family. TyrS type 2 subfamily. As to quaternary structure, homodimer.

The protein localises to the cytoplasm. It catalyses the reaction tRNA(Tyr) + L-tyrosine + ATP = L-tyrosyl-tRNA(Tyr) + AMP + diphosphate + H(+). In terms of biological role, catalyzes the attachment of tyrosine to tRNA(Tyr) in a two-step reaction: tyrosine is first activated by ATP to form Tyr-AMP and then transferred to the acceptor end of tRNA(Tyr). This Wolinella succinogenes (strain ATCC 29543 / DSM 1740 / CCUG 13145 / JCM 31913 / LMG 7466 / NCTC 11488 / FDC 602W) (Vibrio succinogenes) protein is Tyrosine--tRNA ligase.